A 1769-amino-acid chain; its full sequence is Tight junction protein 1 (1769 aa).

The 88-residue stretch at 23-110 (TVTLHRAPGF…NAKITIRRKK (88 aa)) folds into the PDZ 1 domain. Residues 102–112 (AKITIRRKKKV) are compositionally biased toward basic residues. The interval 102 to 188 (AKITIRRKKK…QPPKPTKVTL (87 aa)) is disordered. Positions 123–135 (PVSENEDSYDEEV) are enriched in acidic residues. Residue serine 125 is modified to Phosphoserine. A Phosphotyrosine modification is found at tyrosine 131. The segment covering 148 to 174 (RRSEKSWARDRSASRERSLSPRSDRRS) has biased composition (basic and acidic residues). A phosphoserine mark is found at serine 174, serine 177, and serine 178. Threonine 184 bears the Phosphothreonine mark. The PDZ 2 domain occupies 185–263 (KVTLVKSRKN…KLKMVVQRDE (79 aa)). Serine 211 and serine 240 each carry phosphoserine. A Phosphothreonine modification is found at threonine 266. Phosphoserine is present on residues serine 274, serine 276, serine 279, serine 283, serine 289, serine 293, serine 296, serine 299, serine 322, serine 328, serine 333, serine 336, and serine 352. The disordered stretch occupies residues 295-362 (ASDHSGRSHD…TPVKHADDHT (68 aa)). The segment covering 298 to 326 (HSGRSHDRPPRHSRSRSPDQRSEPSDHSR) has biased composition (basic and acidic residues). Residue threonine 353 is modified to Phosphothreonine. A PDZ 3 domain is found at 420–501 (SMKLVKFRKG…GEEVTILAQK (82 aa)). One can recognise an SH3 domain in the interval 515–583 (GDSFYIRTHF…PNKNRAEQLA (69 aa)). The Guanylate kinase-like domain occupies 609 to 790 (SKRNLRKSRE…WYGALKEAIQ (182 aa)). Phosphoserine occurs at positions 616 and 621. Residues 632-875 (YERVVLREAG…GTPPESAITR (244 aa)) are occludin (OCLN)-binding region. The residue at position 808 (threonine 808) is a Phosphothreonine. Phosphoserine occurs at positions 809 and 820. Tyrosine 821 is subject to Phosphotyrosine. Residues serine 823, serine 827, and serine 836 each carry the phosphoserine modification. Disordered regions lie at residues 824–976 (APGS…LRTP) and 1010–1067 (EMMR…SYTD). 5 positions are modified to phosphothreonine: threonine 845, threonine 847, threonine 853, threonine 860, and threonine 867. The segment covering 878 to 891 (EPVREDSSGMHHEN) has biased composition (basic and acidic residues). Residues 892-905 (QTYPPYSPQAQPQP) show a composition bias toward low complexity. Position 911 is a phosphoserine (serine 911). Polar residues-rich tracts occupy residues 933-952 (PETN…TLTN) and 962-976 (PSTS…LRTP). Residue serine 967 is modified to Phosphoserine. Serine 1070 bears the Phosphoserine mark. 3 disordered regions span residues 1091-1212 (SYYD…KAGH), 1224-1261 (PLIP…MKPQ), and 1273-1589 (KRSA…EFDS). Basic and acidic residues predominate over residues 1108–1124 (QHPRDLDSRQHPEESSE). Position 1138 is a phosphoserine (serine 1138). Phosphotyrosine occurs at positions 1139 and 1164. The segment at 1150–1370 (RTSTLRHEEQ…FDRRSFENKP (221 aa)) is actin-binding region (ABR). A compositionally biased stretch (basic and acidic residues) spans 1273–1286 (KRSASLENKKDENH). The span at 1300 to 1310 (PGAPIIGPKPT) shows a compositional bias: pro residues. Residues 1335-1346 (PPEDIVRSNHYD) are compositionally biased toward basic and acidic residues. Residue tyrosine 1353 is modified to Phosphotyrosine. The residue at position 1365 (serine 1365) is a Phosphoserine. A compositionally biased stretch (polar residues) spans 1387–1401 (HSQNQTNFSSYSSKG). Over residues 1402 to 1419 (KSPEADAPDRSFGEKRYE) the composition is skewed to basic and acidic residues. Serine 1412 carries the phosphoserine modification. 2 stretches are compositionally biased toward polar residues: residues 1460-1471 (NSISLDFQNSLV) and 1514-1523 (AEQTQKTVTP). A compositionally biased stretch (basic and acidic residues) spans 1539–1548 (PFERKFESPK). Phosphoserine occurs at positions 1546 and 1618. Residues 1635–1769 (ATARGVFNNN…NCVSVLIDHF (135 aa)) form the ZU5 domain.

Belongs to the MAGUK family. Homodimer. Forms heterodimers TJP3. Forms a heterodimer (via PDZ2 domain) with TJP2/ZO2 (via PDZ2 domain). Interacts with OCLN. Interacts with CALM, claudins, CGN/cingulin, CXADR, GJA12, GJD3 and UBN1. Interacts (via ZU5 domain) with CDC42BPB and MYZAP. Interacts (via PDZ domain) with GJA1. Interacts (via PDZ domains) with ANKRD2. Interacts with POPDC1 (via the C-terminus cytoplasmic tail). Interacts with HSPA4. Interacts with KIRREL1. Interacts with DLL1. Interacts with USP53 (via the C-terminal region). Interacts with DNMBP (via C-terminal domain); required for the apical cell-cell junction localization of DNMBP. Interacts with SPEF1. Interacts (via N-terminus) with CTNNA1. Interacts with CLDN18. Interacts with CLDN16 (via TRV motif); this is a prerequisite for anchoring of CLDN16 at the tight junction. Interacts with PKP1; the interaction facilitates TJP1/ZO-1 localization to the plasma membrane. Interacts with PATJ (via PDZ1-6 domains); the interaction is required for attachment and extension of TJP1/ZO1 condensates along the apical cell interface. Post-translationally, phosphorylated at tyrosine redidues in response to epidermal growth factor (EGF). This response is dependent on an intact actin microfilament system. Dephosphorylated by PTPRJ.

The protein localises to the cell membrane. The protein resides in the cell junction. Its subcellular location is the tight junction. It localises to the gap junction. Its function is as follows. TJP1, TJP2, and TJP3 are closely related scaffolding proteins that link tight junction (TJ) transmembrane proteins such as claudins, junctional adhesion molecules, and occludin to the actin cytoskeleton. Forms a multistranded TJP1/ZO1 condensate which elongates to form a tight junction belt, the belt is anchored at the apical cell membrane via interaction with PATJ. The tight junction acts to limit movement of substances through the paracellular space and as a boundary between the compositionally distinct apical and basolateral plasma membrane domains of epithelial and endothelial cells. Necessary for lumenogenesis, and particularly efficient epithelial polarization and barrier formation. Plays a role in the regulation of cell migration by targeting CDC42BPBb to the leading edge of migrating cells. With TJP2 and TJP3, participates in the junctional retention and stability of the transcription factor DBPA, but is not involved in its shuttling to the nucleus. May play a role in mediating cell morphology changes during ameloblast differentiation via its role in tight junctions. The polypeptide is Tight junction protein 1 (Canis lupus familiaris (Dog)).